A 138-amino-acid chain; its full sequence is Nucleoside diphosphate kinase (138 aa).

Residues Lys-9, Phe-57, Arg-85, Thr-91, Arg-102, and Asn-112 each coordinate ATP. His-120 functions as the Pros-phosphohistidine intermediate in the catalytic mechanism.

This sequence belongs to the NDK family. In terms of assembly, homotetramer. Mg(2+) is required as a cofactor.

It is found in the cytoplasm. The catalysed reaction is a 2'-deoxyribonucleoside 5'-diphosphate + ATP = a 2'-deoxyribonucleoside 5'-triphosphate + ADP. The enzyme catalyses a ribonucleoside 5'-diphosphate + ATP = a ribonucleoside 5'-triphosphate + ADP. Functionally, major role in the synthesis of nucleoside triphosphates other than ATP. The ATP gamma phosphate is transferred to the NDP beta phosphate via a ping-pong mechanism, using a phosphorylated active-site intermediate. In Streptococcus agalactiae serotype III (strain NEM316), this protein is Nucleoside diphosphate kinase.